A 598-amino-acid polypeptide reads, in one-letter code: MFS transporter L2 (598 aa).

A run of 3 helical transmembrane segments spans residues 83–103 (IAAF…ATSI), 122–142 (FWAG…LGSF), and 150–170 (SLIY…AVAN). A glycan (N-linked (GlcNAc...) asparagine) is linked at Asn-171. 5 consecutive transmembrane segments (helical) span residues 183-203 (GVGG…TVPL), 212-232 (FFGM…GAFA), 239-259 (WVFW…TVFL), 277-297 (WIGM…ITWG), and 309-329 (LVPL…QEKF). An N-linked (GlcNAc...) asparagine glycan is attached at Asn-342. The next 6 helical transmembrane spans lie at 346–366 (ALLY…LYFM), 383–403 (VALF…GIAI), 411–431 (WANW…ILLK), 439–459 (WIFL…AMAL), 476–496 (MFSF…GVVF), and 550–570 (YIWI…LFID).

This sequence belongs to the major facilitator superfamily.

It is found in the membrane. Its function is as follows. MFS transporter; part of the gene cluster that mediates the biosynthesis of squalestatin S1 (SQS1, also known as zaragozic acid A), a lead compound for the treatment of hyper-cholesterolemia by targeting squalene synthase (SS). The polypeptide is MFS transporter L2 (Phoma sp. (strain ATCC 20986 / MF5453)).